The sequence spans 379 residues: UDP-4-amino-4-deoxy-L-arabinose--oxoglutarate aminotransferase (379 aa).

Lys182 is subject to N6-(pyridoxal phosphate)lysine.

The protein belongs to the DegT/DnrJ/EryC1 family. ArnB subfamily. Homodimer. Requires pyridoxal 5'-phosphate as cofactor.

It catalyses the reaction UDP-4-amino-4-deoxy-beta-L-arabinose + 2-oxoglutarate = UDP-beta-L-threo-pentopyranos-4-ulose + L-glutamate. Its pathway is nucleotide-sugar biosynthesis; UDP-4-deoxy-4-formamido-beta-L-arabinose biosynthesis; UDP-4-deoxy-4-formamido-beta-L-arabinose from UDP-alpha-D-glucuronate: step 2/3. The protein operates within bacterial outer membrane biogenesis; lipopolysaccharide biosynthesis. Catalyzes the conversion of UDP-4-keto-arabinose (UDP-Ara4O) to UDP-4-amino-4-deoxy-L-arabinose (UDP-L-Ara4N). The modified arabinose is attached to lipid A and is required for resistance to polymyxin and cationic antimicrobial peptides. The protein is UDP-4-amino-4-deoxy-L-arabinose--oxoglutarate aminotransferase of Erwinia tasmaniensis (strain DSM 17950 / CFBP 7177 / CIP 109463 / NCPPB 4357 / Et1/99).